Reading from the N-terminus, the 163-residue chain is Nucleotide-binding protein MS1759 (163 aa).

It belongs to the YajQ family.

Its function is as follows. Nucleotide-binding protein. This chain is Nucleotide-binding protein MS1759, found in Mannheimia succiniciproducens (strain KCTC 0769BP / MBEL55E).